We begin with the raw amino-acid sequence, 1410 residues long: Endoribonuclease Dicer homolog 2a (1410 aa).

The segment covering 1-15 has biased composition (gly residues); sequence MGGPLTAAGGRGDGG. Residues 1-30 form a disordered region; sequence MGGPLTAAGGRGDGGAKAVEPLRPPPPPDP. One can recognise a Helicase ATP-binding domain in the interval 41–222; the sequence is ALERAVRGNT…HNYSKQISEI (182 aa). 54–61 provides a ligand contact to ATP; the sequence is LETGSGKT. The short motif at 163-166 is the DECH box element; sequence DECH. The 174-residue stretch at 388–561 folds into the Helicase C-terminal domain; that stretch reads TLLQYRHMQD…DTYYRVESTR (174 aa). The Dicer dsRNA-binding fold domain occupies 569-655; that stretch reads SVPLIHFFCS…LPELDVPCDE (87 aa). Residues 827–942 form the PAZ domain; it reads KDIDLLQTKD…LPPELCRIIM (116 aa). RNase III domains lie at 969 to 1124 and 1161 to 1308; these read SVKL…STAG and VRSL…LDSK. Glu-1200, Asp-1294, and Glu-1297 together coordinate Mg(2+). The DRBM domain maps to 1334–1400; sequence DPVKGLQEFC…SKAVLKDLIA (67 aa).

It belongs to the helicase family. Dicer subfamily. As to quaternary structure, may interact with ARGONAUTE1 or PINHEAD through their common PAZ domains. Mg(2+) is required as a cofactor. Requires Mn(2+) as cofactor.

It localises to the nucleus. Probably involved in the RNA silencing pathway. May cleave double-stranded RNA to produce short 21-24 nucleotides (nt) RNAs which target the selective destruction of complementary RNAs. In Oryza sativa subsp. japonica (Rice), this protein is Endoribonuclease Dicer homolog 2a (DCL2A).